We begin with the raw amino-acid sequence, 371 residues long: tRNA 2-selenouridine synthase (371 aa).

One can recognise a Rhodanese domain in the interval F14–D137. C97 serves as the catalytic S-selanylcysteine intermediate.

The protein belongs to the SelU family. Monomer.

The catalysed reaction is 5-methylaminomethyl-2-thiouridine(34) in tRNA + selenophosphate + (2E)-geranyl diphosphate + H2O + H(+) = 5-methylaminomethyl-2-selenouridine(34) in tRNA + (2E)-thiogeraniol + phosphate + diphosphate. The enzyme catalyses 5-methylaminomethyl-2-thiouridine(34) in tRNA + (2E)-geranyl diphosphate = 5-methylaminomethyl-S-(2E)-geranyl-thiouridine(34) in tRNA + diphosphate. It catalyses the reaction 5-methylaminomethyl-S-(2E)-geranyl-thiouridine(34) in tRNA + selenophosphate + H(+) = 5-methylaminomethyl-2-(Se-phospho)selenouridine(34) in tRNA + (2E)-thiogeraniol. It carries out the reaction 5-methylaminomethyl-2-(Se-phospho)selenouridine(34) in tRNA + H2O = 5-methylaminomethyl-2-selenouridine(34) in tRNA + phosphate. In terms of biological role, involved in the post-transcriptional modification of the uridine at the wobble position (U34) of tRNA(Lys), tRNA(Glu) and tRNA(Gln). Catalyzes the conversion of 2-thiouridine (S2U-RNA) to 2-selenouridine (Se2U-RNA). Acts in a two-step process involving geranylation of 2-thiouridine (S2U) to S-geranyl-2-thiouridine (geS2U) and subsequent selenation of the latter derivative to 2-selenouridine (Se2U) in the tRNA chain. The polypeptide is tRNA 2-selenouridine synthase (Aeromonas salmonicida (strain A449)).